Consider the following 671-residue polypeptide: Putative ubiquitin thioesterase 232R (671 aa).

Disordered regions lie at residues 36–62 (EIID…RRIS), 100–123 (SPKI…PVRQ), 171–203 (NQKP…RPVF), and 250–319 (EPIR…SKRS). Residues 110–123 (PSPVHSPVRSPVRQ) show a composition bias toward low complexity. The span at 182–200 (RRSPSPRRSPSPRRSPSPR) shows a compositional bias: pro residues. The segment covering 255-271 (SSSSRSSRSTRRSSSTK) has biased composition (low complexity). The span at 272-319 (PSRRSSSRSRRSSSRSRRSSSRSRRSSSRSRRSSRRSTSRSRSLSKRS) shows a compositional bias: basic residues. An OTU domain is found at 392 to 521 (FRMINVPLDG…NFHYIALEPF (130 aa)). Aspartate 400 is an active-site residue. Residue cysteine 403 is the Nucleophile of the active site. Histidine 514 is an active-site residue. Positions 589 to 625 (KRSLRPSIPPKISTEHRRTPKLRPSVPRPSSIRQSQP) are disordered.

It carries out the reaction Thiol-dependent hydrolysis of ester, thioester, amide, peptide and isopeptide bonds formed by the C-terminal Gly of ubiquitin (a 76-residue protein attached to proteins as an intracellular targeting signal).. Functionally, hydrolase that can remove conjugated ubiquitin from proteins and may therefore play an important regulatory role at the level of protein turnover by preventing degradation. The chain is Putative ubiquitin thioesterase 232R from Acheta domesticus (House cricket).